Here is a 1088-residue protein sequence, read N- to C-terminus: MSQSNSHGQSNLAKFAFNIYGTLSTNSSTPQSHEISPSSSLSSSRSKKQTSQYNTQDTNNNRLSYYCDKEIISLSQLNCSLSIGGYSGDLQHHVVIGGKNYLRLLCVSESQQRIISGINLLESKSIYNSRAPNKLINVNTIKTFADTIATGLSNGVVSIYKISPNGQSKVTGKYSDHNRTINSLDFIESENQLLSGSQDGTIKLWDLRSSSTKPVMTVQANLHSDPIRACQYSPHSAVRNKICVLSVHDSGALCKFDLRTKSGGKVYSPEKKWNLHTGPALSLHIHPEKELVVTGGRDKRISIFNYGERQSRNTPQNLINTYGPVVKVRWSTYTNTEETAEEFEENKQAKPNTLYNYDIACSYLNDDPTITIYNLGRKFIPKQIIHSKKPIQNFIWARNETRSRKIWTISKSSTFSSYNLDRLEDSDVSRPIEDLNNIAMTWDNNNDFCAVSQARYDYDLETYENGINETTEENFDAERNYSLGNEELIHSQANSLTASPVDKPQLTRSLTFNPASSFSTFSPVLVARAATGFLQNDSATSSSSIPNMQVSSSRPKLTRNTSQTTQDSSSSQFASVLPPPSASQTYSSPQYKKNNPPRFMNNPAYVIPVSIPIPANDEYVFRKLSSESLVSTPDGFTLVDVCLLNASVAASVGNNRTSQIWRLLAVSIQEEFESGIEPRRIYAFQPEAINKLPQDVQETSTNANDTLHAETTNSNFVESFKSTSTSGSQFGKQSDKDERKLQSKNSSGNLMDMINKANRTNSFSATSFKFKEQERKEDESQKAQSIKDENERASIHSKSAPISISSHPEDLDDENMGSNNSAALKFSPPSVGVSIPSTRIISSSLASSPKSVRGPSGVKSHISRSRPSPPVQTWLKQKNLEVSNGSAMASTSGLSLTLKRNKTNEEGDQLTKAWKFKSLLRKSLDYATLQGDIIFCSTAALLFYDIVPEIISQFECLEWLGIYIEVLQRKRLFVNAINVIKCATADIQEKLQKLYCQDLSLRFYCSNCQALLVNEKSKFSGKGEFGYWYCDECSKLQSQCVYCNEPCKGLAVTVGLKCGHHGHFGCLKEWFIEDQNTECPGGCGYQII.

The segment at 26-56 is disordered; the sequence is NSSTPQSHEISPSSSLSSSRSKKQTSQYNTQ. Residues 27 to 44 are compositionally biased toward low complexity; sequence SSTPQSHEISPSSSLSSS. WD repeat units lie at residues 131–170, 176–215, 222–266, 275–314, 367–417, 432–473, and 502–546; these read APNK…QSKV, DHNR…TKPV, LHSD…GGKV, LHTG…SRNT, DPTI…TFSS, IEDL…TTEE, and DKPQ…SSIP. Polar residues predominate over residues 537-560; the sequence is DSATSSSSIPNMQVSSSRPKLTRN. Positions 537 to 597 are disordered; it reads DSATSSSSIP…SPQYKKNNPP (61 aa). Residues 561 to 572 show a composition bias toward low complexity; sequence TSQTTQDSSSSQ. Positions 582–593 are enriched in polar residues; the sequence is ASQTYSSPQYKK. The stretch at 631–671 is one WD 8 repeat; sequence STPDGFTLVDVCLLNASVAASVGNNRTSQIWRLLAVSIQEE. The span at 709-732 shows a compositional bias: polar residues; it reads AETTNSNFVESFKSTSTSGSQFGK. Disordered regions lie at residues 709-751, 764-829, and 844-871; these read AETT…GNLM, SATS…FSPP, and SLAS…SPPV. Residues 769-794 are compositionally biased toward basic and acidic residues; that stretch reads KFKEQERKEDESQKAQSIKDENERAS. Over residues 796–806 the composition is skewed to polar residues; it reads HSKSAPISISS. The RING-type; degenerate zinc-finger motif lies at 1040 to 1083; it reads CVYCNEPCKGLAVTVGLKCGHHGHFGCLKEWFIEDQNTECPGGC.

The protein belongs to the WD repeat RTC1 family.

It is found in the vacuole. May be involved in a process influencing telomere capping. The sequence is that of Restriction of telomere capping protein 1 (RTC1) from Candida albicans (strain SC5314 / ATCC MYA-2876) (Yeast).